A 227-amino-acid polypeptide reads, in one-letter code: E3 ubiquitin-protein ligase RNF186 (227 aa).

An RING-type zinc finger spans residues 40–86; that stretch reads CLVCREPYSCPRLPKLLACQHAFCAICLKLLLCVQDNTWSITCPLCR. 2 consecutive transmembrane segments (helical) span residues 158 to 178 and 180 to 200; these read HLLLLALLIILIGPFIYPGVL and WVLTFIIALALLMSTLFCCLP.

Interacts with BNIP1. Polyubiquitinated. 'Lys-29'-linked autoubiquitination leads to proteasomal degradation.

The protein resides in the endoplasmic reticulum membrane. The catalysed reaction is S-ubiquitinyl-[E2 ubiquitin-conjugating enzyme]-L-cysteine + [acceptor protein]-L-lysine = [E2 ubiquitin-conjugating enzyme]-L-cysteine + N(6)-ubiquitinyl-[acceptor protein]-L-lysine.. It functions in the pathway protein modification; protein ubiquitination. E3 ubiquitin protein ligase that is part of an apoptotic signaling pathway activated by endoplasmic reticulum stress. Stimulates the expression of proteins specific of the unfolded protein response (UPR), ubiquitinates BNIP1 and regulates its localization to the mitochondrion and induces calcium release from the endoplasmic reticulum that ultimately leads to cell apoptosis. Plays a role in the maintenance of intestinal homeostasis and clearance of enteric pathogens. Upon NOD2 stimulation, ubiquitinates the ER stress sensor activating transcription factor 6/ATF6 and promotes the unfolded protein response UPR. Participates in basal level of autophagy maintenance by regulating the ubiquitination of EPHB2 and EPHB3. Upon stimulation by ligand EFNB1, ubiquitinates EPHB2 and further recruits MAP1LC3B for autophagy induction. Controls nutrient sensing by ubiquitinating Sestrin-2/SESN2, which is an intracellular sensor of cytosolic leucine and inhibitor of mTORC1 activity. The protein is E3 ubiquitin-protein ligase RNF186 of Homo sapiens (Human).